Consider the following 612-residue polypeptide: Chaperone protein DnaK (612 aa).

At T173 the chain carries Phosphothreonine; by autocatalysis. The interval 576–612 is disordered; that stretch reads AAKQAQAQQDGGAGAKKADDNVVDAEYEEVNDDKDQK. The span at 596–612 shows a compositional bias: acidic residues; that stretch reads NVVDAEYEEVNDDKDQK.

This sequence belongs to the heat shock protein 70 family.

Its function is as follows. Acts as a chaperone. The chain is Chaperone protein DnaK from Bacillus licheniformis (strain ATCC 14580 / DSM 13 / JCM 2505 / CCUG 7422 / NBRC 12200 / NCIMB 9375 / NCTC 10341 / NRRL NRS-1264 / Gibson 46).